The primary structure comprises 103 residues: Protamine-3 (103 aa).

A disordered region spans residues 1–103 (MGSRCAKLNT…QSPEPKRTPS (103 aa)). The segment covering 10–21 (TGQSPGHSPGHS) has biased composition (low complexity). The span at 50 to 66 (GEEEEEEEEEGEEEEKE) shows a compositional bias: acidic residues. The segment covering 78 to 90 (EPERQEEGHKDNA) has biased composition (basic and acidic residues). Position 95 is a phosphoserine (serine 95).

This sequence belongs to the protamine P3 family.

It localises to the nucleus. Its subcellular location is the chromosome. Functionally, protamines substitute for histones in the chromatin of sperm during the haploid phase of spermatogenesis. They compact sperm DNA into a highly condensed, stable and inactive complex. This is Protamine-3 (PRM3) from Homo sapiens (Human).